The following is a 267-amino-acid chain: Indole-3-glycerol phosphate synthase (267 aa).

It belongs to the TrpC family.

The catalysed reaction is 1-(2-carboxyphenylamino)-1-deoxy-D-ribulose 5-phosphate + H(+) = (1S,2R)-1-C-(indol-3-yl)glycerol 3-phosphate + CO2 + H2O. It participates in amino-acid biosynthesis; L-tryptophan biosynthesis; L-tryptophan from chorismate: step 4/5. In Delftia acidovorans (strain DSM 14801 / SPH-1), this protein is Indole-3-glycerol phosphate synthase.